The sequence spans 140 residues: Cytochrome c-type biogenesis protein CcmE (140 aa).

The Cytoplasmic segment spans residues 1 to 7; that stretch reads MTKRQNR. Residues 8-28 traverse the membrane as a helical; Signal-anchor for type II membrane protein segment; it reads MVLVALLVIGVSLAGYLGLKA. Residues 29–140 are Periplasmic-facing; it reads FNENLLYFLS…DALEKAKNKQ (112 aa). Heme-binding residues include His120 and Tyr124.

It belongs to the CcmE/CycJ family.

The protein resides in the cell inner membrane. Its function is as follows. Heme chaperone required for the biogenesis of c-type cytochromes. Transiently binds heme delivered by CcmC and transfers the heme to apo-cytochromes in a process facilitated by CcmF and CcmH. This Vesicomyosocius okutanii subsp. Calyptogena okutanii (strain HA) protein is Cytochrome c-type biogenesis protein CcmE.